The chain runs to 424 residues: GTPase Obg (424 aa).

One can recognise an Obg domain in the interval 1–158; the sequence is MFVDRARIYI…LWVILELKLL (158 aa). Positions 159-330 constitute an OBG-type G domain; sequence ADVGLIGFPN…LIYYAAQKLK (172 aa). GTP contacts are provided by residues 165–172, 190–194, 212–215, 282–285, and 311–313; these read GFPNVGKS, FTTIN, DIPG, NKMD, and SAA. Serine 172 and threonine 192 together coordinate Mg(2+). One can recognise an OCT domain in the interval 347–424; sequence YTAVEEEPFN…MYDLEFEYFR (78 aa).

This sequence belongs to the TRAFAC class OBG-HflX-like GTPase superfamily. OBG GTPase family. In terms of assembly, monomer. Requires Mg(2+) as cofactor.

The protein localises to the cytoplasm. An essential GTPase which binds GTP, GDP and possibly (p)ppGpp with moderate affinity, with high nucleotide exchange rates and a fairly low GTP hydrolysis rate. Plays a role in control of the cell cycle, stress response, ribosome biogenesis and in those bacteria that undergo differentiation, in morphogenesis control. In Acetivibrio thermocellus (strain ATCC 27405 / DSM 1237 / JCM 9322 / NBRC 103400 / NCIMB 10682 / NRRL B-4536 / VPI 7372) (Clostridium thermocellum), this protein is GTPase Obg.